Consider the following 320-residue polypeptide: ATP-dependent 6-phosphofructokinase (320 aa).

Residue Gly12 coordinates ATP. An ADP-binding site is contributed by 22 to 26 (RGVVR). ATP is bound by residues 73-74 (RF) and 103-106 (GDGS). Asp104 is a Mg(2+) binding site. 126–128 (TID) is a substrate binding site. Asp128 (proton acceptor) is an active-site residue. Arg155 serves as a coordination point for ADP. Residues Arg163 and 170 to 172 (MGR) contribute to the substrate site. Residues 186–188 (GCE), Lys212, and 214–216 (KKH) each bind ADP. Residues Glu223, Arg244, and 250–253 (HIQR) each bind substrate.

This sequence belongs to the phosphofructokinase type A (PFKA) family. ATP-dependent PFK group I subfamily. Prokaryotic clade 'B1' sub-subfamily. Homotetramer. It depends on Mg(2+) as a cofactor.

The protein localises to the cytoplasm. It catalyses the reaction beta-D-fructose 6-phosphate + ATP = beta-D-fructose 1,6-bisphosphate + ADP + H(+). The protein operates within carbohydrate degradation; glycolysis; D-glyceraldehyde 3-phosphate and glycerone phosphate from D-glucose: step 3/4. With respect to regulation, allosterically activated by ADP and other diphosphonucleosides, and allosterically inhibited by phosphoenolpyruvate. Functionally, catalyzes the phosphorylation of D-fructose 6-phosphate to fructose 1,6-bisphosphate by ATP, the first committing step of glycolysis. The chain is ATP-dependent 6-phosphofructokinase from Aliivibrio salmonicida (strain LFI1238) (Vibrio salmonicida (strain LFI1238)).